A 382-amino-acid polypeptide reads, in one-letter code: Dual-specificity RNA methyltransferase RlmN (382 aa).

Catalysis depends on glutamate 96, which acts as the Proton acceptor. The region spanning 102–342 (QGKRGTLCVS…VRTTRGEDID (241 aa)) is the Radical SAM core domain. The cysteines at positions 109 and 345 are disulfide-linked. [4Fe-4S] cluster is bound by residues cysteine 116, cysteine 120, and cysteine 123. S-adenosyl-L-methionine is bound by residues 170–171 (GE), serine 202, 224–226 (SLH), and asparagine 302. Cysteine 345 acts as the S-methylcysteine intermediate in catalysis.

This sequence belongs to the radical SAM superfamily. RlmN family. The cofactor is [4Fe-4S] cluster.

The protein localises to the cytoplasm. It carries out the reaction adenosine(2503) in 23S rRNA + 2 reduced [2Fe-2S]-[ferredoxin] + 2 S-adenosyl-L-methionine = 2-methyladenosine(2503) in 23S rRNA + 5'-deoxyadenosine + L-methionine + 2 oxidized [2Fe-2S]-[ferredoxin] + S-adenosyl-L-homocysteine. It catalyses the reaction adenosine(37) in tRNA + 2 reduced [2Fe-2S]-[ferredoxin] + 2 S-adenosyl-L-methionine = 2-methyladenosine(37) in tRNA + 5'-deoxyadenosine + L-methionine + 2 oxidized [2Fe-2S]-[ferredoxin] + S-adenosyl-L-homocysteine. In terms of biological role, specifically methylates position 2 of adenine 2503 in 23S rRNA and position 2 of adenine 37 in tRNAs. m2A2503 modification seems to play a crucial role in the proofreading step occurring at the peptidyl transferase center and thus would serve to optimize ribosomal fidelity. The protein is Dual-specificity RNA methyltransferase RlmN of Pseudomonas syringae pv. syringae (strain B728a).